The sequence spans 102 residues: Nucleoid-associated protein WIGBR5260 (102 aa).

This sequence belongs to the YbaB/EbfC family. In terms of assembly, homodimer.

The protein resides in the cytoplasm. Its subcellular location is the nucleoid. In terms of biological role, binds to DNA and alters its conformation. May be involved in regulation of gene expression, nucleoid organization and DNA protection. The protein is Nucleoid-associated protein WIGBR5260 of Wigglesworthia glossinidia brevipalpis.